A 77-amino-acid polypeptide reads, in one-letter code: Putative sulfur carrier protein YedF (77 aa).

Catalysis depends on C17, which acts as the Cysteine persulfide intermediate.

It belongs to the sulfur carrier protein TusA family.

This is Putative sulfur carrier protein YedF (yedF) from Escherichia coli O157:H7.